The sequence spans 413 residues: Arginine biosynthesis bifunctional protein ArgJ (413 aa).

Positions 154, 180, 191, 277, 408, and 413 each coordinate substrate. Thr191 (nucleophile) is an active-site residue.

This sequence belongs to the ArgJ family. As to quaternary structure, heterotetramer of two alpha and two beta chains.

It is found in the cytoplasm. It carries out the reaction N(2)-acetyl-L-ornithine + L-glutamate = N-acetyl-L-glutamate + L-ornithine. The catalysed reaction is L-glutamate + acetyl-CoA = N-acetyl-L-glutamate + CoA + H(+). Its pathway is amino-acid biosynthesis; L-arginine biosynthesis; L-ornithine and N-acetyl-L-glutamate from L-glutamate and N(2)-acetyl-L-ornithine (cyclic): step 1/1. It functions in the pathway amino-acid biosynthesis; L-arginine biosynthesis; N(2)-acetyl-L-ornithine from L-glutamate: step 1/4. Its function is as follows. Catalyzes two activities which are involved in the cyclic version of arginine biosynthesis: the synthesis of N-acetylglutamate from glutamate and acetyl-CoA as the acetyl donor, and of ornithine by transacetylation between N(2)-acetylornithine and glutamate. This is Arginine biosynthesis bifunctional protein ArgJ from Synechocystis sp. (strain ATCC 27184 / PCC 6803 / Kazusa).